A 172-amino-acid chain; its full sequence is 3-hydroxydecanoyl-[acyl-carrier-protein] dehydratase (172 aa).

Histidine 71 is an active-site residue.

This sequence belongs to the thioester dehydratase family. FabA subfamily. As to quaternary structure, homodimer.

Its subcellular location is the cytoplasm. It carries out the reaction a (3R)-hydroxyacyl-[ACP] = a (2E)-enoyl-[ACP] + H2O. The catalysed reaction is (3R)-hydroxydecanoyl-[ACP] = (2E)-decenoyl-[ACP] + H2O. It catalyses the reaction (2E)-decenoyl-[ACP] = (3Z)-decenoyl-[ACP]. It functions in the pathway lipid metabolism; fatty acid biosynthesis. Necessary for the introduction of cis unsaturation into fatty acids. Catalyzes the dehydration of (3R)-3-hydroxydecanoyl-ACP to E-(2)-decenoyl-ACP and then its isomerization to Z-(3)-decenoyl-ACP. Can catalyze the dehydratase reaction for beta-hydroxyacyl-ACPs with saturated chain lengths up to 16:0, being most active on intermediate chain length. The polypeptide is 3-hydroxydecanoyl-[acyl-carrier-protein] dehydratase (Aliivibrio fischeri (strain ATCC 700601 / ES114) (Vibrio fischeri)).